The primary structure comprises 420 residues: WD repeat-containing protein 21 (420 aa).

The short motif at 73-75 is the DDB-boX element; that stretch reads RQF. WD repeat units lie at residues 251–289, 293–332, and 341–383; these read QSKGDVFSLKYLGDNLVIAGCRNKSVLVYDLRTKKECVQ, HGSSICSMQNLDFSQPKLLVSGLESKISLYDCRFLQSKKR, and GHSN…PFKE.

The protein localises to the cytoplasm. Its subcellular location is the nucleus. The chain is WD repeat-containing protein 21 (wdr21) from Schizosaccharomyces pombe (strain 972 / ATCC 24843) (Fission yeast).